The following is a 316-amino-acid chain: N-acetyl-gamma-glutamyl-phosphate reductase (316 aa).

Cysteine 136 is a catalytic residue.

This sequence belongs to the NAGSA dehydrogenase family. Type 1 subfamily.

It is found in the cytoplasm. It catalyses the reaction N-acetyl-L-glutamate 5-semialdehyde + phosphate + NADP(+) = N-acetyl-L-glutamyl 5-phosphate + NADPH + H(+). Its pathway is amino-acid biosynthesis; L-arginine biosynthesis; N(2)-acetyl-L-ornithine from L-glutamate: step 3/4. Functionally, catalyzes the NADPH-dependent reduction of N-acetyl-5-glutamyl phosphate to yield N-acetyl-L-glutamate 5-semialdehyde. The protein is N-acetyl-gamma-glutamyl-phosphate reductase of Xanthomonas oryzae pv. oryzae (strain MAFF 311018).